The following is a 144-amino-acid chain: MNRHTARELAFKALFGLDFAPEKTLDTLESLWAEKIAEGKIPPEKLVDFSRELVRGVIEKKERLDEIIRRRAIGWDFKRLAKVDKTLLRLALYEMLYRPDIDIPVSIDEAVELAKVYGEEESPKFINGILGYVAEHIDEFWEES.

Belongs to the NusB family.

Functionally, involved in transcription antitermination. Required for transcription of ribosomal RNA (rRNA) genes. Binds specifically to the boxA antiterminator sequence of the ribosomal RNA (rrn) operons. In Carboxydothermus hydrogenoformans (strain ATCC BAA-161 / DSM 6008 / Z-2901), this protein is Transcription antitermination protein NusB.